Here is a 163-residue protein sequence, read N- to C-terminus: Oocyte-secreted protein 1 (163 aa).

Residues 1-21 (MKPSSGLRGLLVLFSLTWTCA) form the signal peptide.

The protein belongs to the PLAC1 family. Oocyte-specific.

The protein localises to the secreted. Its function is as follows. May be involved in cell differentiation. The polypeptide is Oocyte-secreted protein 1 (OOSP1) (Bos taurus (Bovine)).